We begin with the raw amino-acid sequence, 463 residues long: L-seryl-tRNA(Sec) selenium transferase (463 aa).

N6-(pyridoxal phosphate)lysine is present on K295.

This sequence belongs to the SelA family. Homodecamer; pentamer of dimers. Binds only one seryl-tRNA(Sec) per dimer. Pyridoxal 5'-phosphate is required as a cofactor.

It localises to the cytoplasm. The catalysed reaction is L-seryl-tRNA(Sec) + selenophosphate + H(+) = L-selenocysteinyl-tRNA(Sec) + phosphate. It functions in the pathway aminoacyl-tRNA biosynthesis; selenocysteinyl-tRNA(Sec) biosynthesis; selenocysteinyl-tRNA(Sec) from L-seryl-tRNA(Sec) (bacterial route): step 1/1. Converts seryl-tRNA(Sec) to selenocysteinyl-tRNA(Sec) required for selenoprotein biosynthesis. This is L-seryl-tRNA(Sec) selenium transferase from Escherichia coli O139:H28 (strain E24377A / ETEC).